Reading from the N-terminus, the 1294-residue chain is Phosphoribosylformylglycinamidine synthase (1294 aa).

The interval 303-325 is disordered; that stretch reads WPGAATGSGGEIRDEGATGRGSK. ATP is bound by residues 305 to 316, 384 to 386, and A676; these read GAATGSGGEIRD and TGY. Mg(2+) contacts are provided by D677, E716, N720, and D883. S885 contacts ATP. The region spanning 1041–1294 is the Glutamine amidotransferase type-1 domain; it reads VAVLREQGVN…MFRNARRQLG (254 aa). The Nucleophile role is filled by C1134. Catalysis depends on residues H1259 and E1261.

The protein in the N-terminal section; belongs to the FGAMS family. Monomer.

The protein resides in the cytoplasm. It catalyses the reaction N(2)-formyl-N(1)-(5-phospho-beta-D-ribosyl)glycinamide + L-glutamine + ATP + H2O = 2-formamido-N(1)-(5-O-phospho-beta-D-ribosyl)acetamidine + L-glutamate + ADP + phosphate + H(+). It functions in the pathway purine metabolism; IMP biosynthesis via de novo pathway; 5-amino-1-(5-phospho-D-ribosyl)imidazole from N(2)-formyl-N(1)-(5-phospho-D-ribosyl)glycinamide: step 1/2. Phosphoribosylformylglycinamidine synthase involved in the purines biosynthetic pathway. Catalyzes the ATP-dependent conversion of formylglycinamide ribonucleotide (FGAR) and glutamine to yield formylglycinamidine ribonucleotide (FGAM) and glutamate. This chain is Phosphoribosylformylglycinamidine synthase, found in Pectobacterium atrosepticum (strain SCRI 1043 / ATCC BAA-672) (Erwinia carotovora subsp. atroseptica).